A 300-amino-acid polypeptide reads, in one-letter code: Actin-related protein 2/3 complex subunit 2-B (300 aa).

Belongs to the ARPC2 family. As to quaternary structure, component of the Arp2/3 complex composed of actr2/arp2, actr3/arp3, arpc1 (arpc1a or arpc1b), arpc2, arpc3, arpc4 and arpc5.

It is found in the cytoplasm. Its subcellular location is the cytoskeleton. The protein localises to the cell projection. It localises to the nucleus. Functionally, actin-binding component of the Arp2/3 complex, a multiprotein complex that mediates actin polymerization upon stimulation by nucleation-promoting factor (NPF). The Arp2/3 complex mediates the formation of branched actin networks in the cytoplasm, providing the force for cell motility. In addition to its role in the cytoplasmic cytoskeleton, the Arp2/3 complex also promotes actin polymerization in the nucleus, thereby regulating gene transcription and repair of damaged DNA. The Arp2/3 complex promotes homologous recombination (HR) repair in response to DNA damage by promoting nuclear actin polymerization, leading to drive motility of double-strand breaks (DSBs). The sequence is that of Actin-related protein 2/3 complex subunit 2-B (arpc2-b) from Xenopus laevis (African clawed frog).